Here is a 220-residue protein sequence, read N- to C-terminus: Protein DGCR6L (220 aa).

Residues 76–159 (KSLYNQRLRL…ADQQSTLEKA (84 aa)) are a coiled coil.

Belongs to the gonadal family. Widely expressed in fetal and adult tissues. Highest expression in liver, heart and skeletal muscle. Lower levels in pancreas and placenta. Weak expression in brain.

It localises to the nucleus. May play a role in neural crest cell migration into the third and fourth pharyngeal pouches. The polypeptide is Protein DGCR6L (DGCR6L) (Homo sapiens (Human)).